A 281-amino-acid chain; its full sequence is 2-dehydro-3-deoxyphosphooctonate aldolase (281 aa).

This sequence belongs to the KdsA family.

Its subcellular location is the cytoplasm. The enzyme catalyses D-arabinose 5-phosphate + phosphoenolpyruvate + H2O = 3-deoxy-alpha-D-manno-2-octulosonate-8-phosphate + phosphate. Its pathway is carbohydrate biosynthesis; 3-deoxy-D-manno-octulosonate biosynthesis; 3-deoxy-D-manno-octulosonate from D-ribulose 5-phosphate: step 2/3. The protein operates within bacterial outer membrane biogenesis; lipopolysaccharide biosynthesis. This is 2-dehydro-3-deoxyphosphooctonate aldolase from Acidithiobacillus ferrooxidans (strain ATCC 23270 / DSM 14882 / CIP 104768 / NCIMB 8455) (Ferrobacillus ferrooxidans (strain ATCC 23270)).